Here is a 248-residue protein sequence, read N- to C-terminus: PF03932 family protein CutC (248 aa).

The protein belongs to the CutC family.

The protein localises to the cytoplasm. The chain is PF03932 family protein CutC from Porphyromonas gingivalis (strain ATCC BAA-308 / W83).